The chain runs to 359 residues: Peptide methionine sulfoxide reductase MsrA/MsrB (359 aa).

The interval 36 to 189 (RVIYLAGGCF…PGGYCHIDLK (154 aa)) is peptide methionine sulfoxide reductase A. Cys-44 is an active-site residue. The MsrB domain maps to 206–329 (DEVLKKKLTK…NSAALRFIPL (124 aa)). The active-site Nucleophile is Cys-318.

In the N-terminal section; belongs to the MsrA Met sulfoxide reductase family. It in the C-terminal section; belongs to the MsrB Met sulfoxide reductase family.

The enzyme catalyses L-methionyl-[protein] + [thioredoxin]-disulfide + H2O = L-methionyl-(S)-S-oxide-[protein] + [thioredoxin]-dithiol. The catalysed reaction is [thioredoxin]-disulfide + L-methionine + H2O = L-methionine (S)-S-oxide + [thioredoxin]-dithiol. It carries out the reaction L-methionyl-[protein] + [thioredoxin]-disulfide + H2O = L-methionyl-(R)-S-oxide-[protein] + [thioredoxin]-dithiol. Functionally, has an important function as a repair enzyme for proteins that have been inactivated by oxidation. Catalyzes the reversible oxidation-reduction of methionine sulfoxide in proteins to methionine. This is Peptide methionine sulfoxide reductase MsrA/MsrB (msrAB) from Helicobacter pylori (strain J99 / ATCC 700824) (Campylobacter pylori J99).